Consider the following 88-residue polypeptide: Large ribosomal subunit protein bL27 (88 aa).

The disordered stretch occupies residues 1-21; the sequence is MAHKKGASSSRNGRDSAAHRL.

Belongs to the bacterial ribosomal protein bL27 family.

This chain is Large ribosomal subunit protein bL27, found in Mycobacterium ulcerans (strain Agy99).